The sequence spans 789 residues: LPS-assembly protein LptD (789 aa).

A signal peptide spans 1–39; sequence MPPRQLSQTTPSCAVVPRKRRLVAALIAVPGLMPALAHA.

The protein belongs to the LptD family. In terms of assembly, component of the lipopolysaccharide transport and assembly complex. Interacts with LptE and LptA.

The protein resides in the cell outer membrane. Its function is as follows. Together with LptE, is involved in the assembly of lipopolysaccharide (LPS) at the surface of the outer membrane. The chain is LPS-assembly protein LptD from Paraburkholderia xenovorans (strain LB400).